A 317-amino-acid chain; its full sequence is MKI67 FHA domain-interacting nucleolar phosphoprotein (317 aa).

Alanine 2 carries the N-acetylalanine modification. A Glycyl lysine isopeptide (Lys-Gly) (interchain with G-Cter in SUMO2) cross-link involves residue lysine 40. An RRM domain is found at 47–125 (GVVYLGHLPS…RLLSCKFMPR (79 aa)). The residue at position 116 (arginine 116) is an Omega-N-methylarginine. Glycyl lysine isopeptide (Lys-Gly) (interchain with G-Cter in SUMO2) cross-links involve residues lysine 181 and lysine 194. Position 203 is a citrulline (arginine 203). The disordered stretch occupies residues 203–317 (RDSEGNQVLP…KRPRKRKSKQ (115 aa)). The segment covering 213 to 233 (DQKEGLSGEPRRKEKMMKEDI) has biased composition (basic and acidic residues). Position 219 is a phosphoserine (serine 219). Basic residues predominate over residues 238-248 (PKKRKRSRRKK). Residue serine 253 is modified to Phosphoserine. A phosphothreonine mark is found at threonine 257 and threonine 261. Positions 265-284 (LERRKSQVMEVGGDKDDEII) are enriched in basic and acidic residues. Omega-N-methylated arginine occurs at positions 267 and 268. Position 270 is a phosphoserine (serine 270). Lysine 293 is covalently cross-linked (Glycyl lysine isopeptide (Lys-Gly) (interchain with G-Cter in SUMO1); alternate). Lysine 293 is covalently cross-linked (Glycyl lysine isopeptide (Lys-Gly) (interchain with G-Cter in SUMO2); alternate). Threonine 301 is subject to Phosphothreonine. Residues 308 to 317 (KRPRKRKSKQ) show a composition bias toward basic residues.

As to quaternary structure, binds to the FHA domain of MKI67; this interaction is enhanced in mitosis. Phosphorylated. In terms of processing, citrullinated by PADI4. In terms of tissue distribution, expressed in brain, heart, hind limb muscles, intestine, liver, skin and spleen.

It is found in the nucleus. The protein localises to the nucleolus. Its subcellular location is the chromosome. The protein is MKI67 FHA domain-interacting nucleolar phosphoprotein (Nifk) of Mus musculus (Mouse).